The chain runs to 157 residues: Ribosome maturation factor RimP (157 aa).

It belongs to the RimP family.

It is found in the cytoplasm. Functionally, required for maturation of 30S ribosomal subunits. The chain is Ribosome maturation factor RimP from Thermobifida fusca (strain YX).